We begin with the raw amino-acid sequence, 115 residues long: NAD(P)H-quinone oxidoreductase subunit M (115 aa).

This sequence belongs to the complex I NdhM subunit family. In terms of assembly, NDH-1 can be composed of about 15 different subunits; different subcomplexes with different compositions have been identified which probably have different functions.

Its subcellular location is the cellular thylakoid membrane. It catalyses the reaction a plastoquinone + NADH + (n+1) H(+)(in) = a plastoquinol + NAD(+) + n H(+)(out). The catalysed reaction is a plastoquinone + NADPH + (n+1) H(+)(in) = a plastoquinol + NADP(+) + n H(+)(out). Its function is as follows. NDH-1 shuttles electrons from an unknown electron donor, via FMN and iron-sulfur (Fe-S) centers, to quinones in the respiratory and/or the photosynthetic chain. The immediate electron acceptor for the enzyme in this species is believed to be plastoquinone. Couples the redox reaction to proton translocation, and thus conserves the redox energy in a proton gradient. Cyanobacterial NDH-1 also plays a role in inorganic carbon-concentration. This chain is NAD(P)H-quinone oxidoreductase subunit M, found in Prochlorococcus marinus subsp. pastoris (strain CCMP1986 / NIES-2087 / MED4).